A 322-amino-acid polypeptide reads, in one-letter code: Gas vesicle protein L (322 aa).

A disordered region spans residues 1–85 (MTEQSSGSAT…SEQATVDWST (85 aa)). Residues 17-36 (ETAKQETGRKNEQPEERTVT) show a composition bias toward basic and acidic residues. Polar residues predominate over residues 45–57 (INTTTAESETGSE). Residues 58–72 (QESKAGSEQESKAGS) are compositionally biased toward basic and acidic residues. Positions 73-85 (EQESEQATVDWST) are enriched in polar residues.

It belongs to the gas vesicle GvpF/GvpL family. GvpF to GvpM interact with each other in vitro, and may form multi-subunit complex(es). Interacts with GvpC, GvpN and GvpO.

The protein localises to the gas vesicle. Proteins GvpF to GvpM might be involved in nucleating gas vesicle formation. A minor component of the gas vesicle. Gas vesicles are small, hollow, gas filled protein structures that are found in several microbial planktonic microorganisms. They allow positioning of halobacteria at the optimal depth for growth in the poorly aerated, shallow brine pools of their habitat. In terms of biological role, expression of a 9.5 kb mc-vac DNA fragment containing 2 divergently transcribed regions (gvpD-gvpE-gvpF-gvpG-gvpH-gvpI-gvpJ-gvpK-gvpL-gvpM and gvpA-gvpC-gvpN-gvpO) allows H.volcanii to produce gas vesicles. This Haloferax mediterranei (strain ATCC 33500 / DSM 1411 / JCM 8866 / NBRC 14739 / NCIMB 2177 / R-4) (Halobacterium mediterranei) protein is Gas vesicle protein L.